The following is a 310-amino-acid chain: MIIVTGGAGFIGSNIVKALNDKGITDILVVDNLKDGTKFVNLVDLNIADYMDKEDFLIQIMSGEELGDIEAIFHEGACSSTTEWDGKYMMDNNYQYSKELLHYCLEREIPFLYASSAATYGGRTSDFIESREYEKPLNVYGYSKFLFDEYVRQILPEANSQIVGFRYFNVYGPREGHKGSMASVAFHLNTQLNNGESPKLFEGSENFKRDFVYVGDVAAVNLWFLESGKSGIFNLGTGRAESFQAVADATLAYHKKGSIEYIPFPDKLKGRYQAFTQADLTNLRNAGYDKPFKTVAEGVTEYMAWLNRDA.

Residues 10-11 (FI), 31-32 (DN), Lys38, Lys53, 75-79 (EGACS), and Asn92 each bind NADP(+). The active-site Proton acceptor is Tyr140. Lys144 contributes to the NADP(+) binding site. A substrate-binding site is contributed by Asn169. NADP(+)-binding residues include Val170 and Lys178. Lys178 (proton acceptor) is an active-site residue. Substrate contacts are provided by residues Ser180, His187, 201–204 (FEGS), Arg209, and Tyr272.

Belongs to the NAD(P)-dependent epimerase/dehydratase family. HldD subfamily. As to quaternary structure, homopentamer. It depends on NADP(+) as a cofactor.

It carries out the reaction ADP-D-glycero-beta-D-manno-heptose = ADP-L-glycero-beta-D-manno-heptose. It participates in nucleotide-sugar biosynthesis; ADP-L-glycero-beta-D-manno-heptose biosynthesis; ADP-L-glycero-beta-D-manno-heptose from D-glycero-beta-D-manno-heptose 7-phosphate: step 4/4. In terms of biological role, catalyzes the interconversion between ADP-D-glycero-beta-D-manno-heptose and ADP-L-glycero-beta-D-manno-heptose via an epimerization at carbon 6 of the heptose. This Salmonella heidelberg (strain SL476) protein is ADP-L-glycero-D-manno-heptose-6-epimerase.